Consider the following 75-residue polypeptide: Cruzioseptin-6 (75 aa).

The first 22 residues, 1 to 22 (MAYLKKSLFLVLFLGLVSLSIC), serve as a signal peptide directing secretion. A propeptide spanning residues 23 to 43 (EEEKREEENEEEQEDDDQSEE) is cleaved from the precursor. The segment at 24–44 (EEKREEENEEEQEDDDQSEEK) is disordered. A compositionally biased stretch (acidic residues) spans 30–41 (ENEEEQEDDDQS).

Expressed by the skin glands.

The protein resides in the secreted. Its function is as follows. Has antimicrobial activity. The chain is Cruzioseptin-6 from Cruziohyla calcarifer (Splendid leaf frog).